The primary structure comprises 77 residues: Envelope glycoprotein (77 aa).

The Extracellular portion of the chain corresponds to 1-24; sequence LERQKNQNWYEGWFNSSPWFTTLL. Residues 25 to 45 traverse the membrane as a helical segment; sequence STIAGPLLLLLLLLILGPCII. A lipid anchor (S-palmitoyl cysteine; by host) is attached at C43. Residues 46–77 lie on the Cytoplasmic side of the membrane; the sequence is NRLVQFINNRVSAVKILVLRQKYQTLDNEDNL. Positions 68–71 match the YXXL motif; contains endocytosis signal motif; that stretch reads YQTL.

As to quaternary structure, the mature envelope protein (Env) consists of a trimer of SU-TM heterodimers attached by noncovalent interactions or by a labile interchain disulfide bond. In terms of processing, specific enzymatic cleavages in vivo yield mature proteins. Envelope glycoproteins are synthesized as an inactive precursor that is N-glycosylated and processed likely by host cell furin or by a furin-like protease in the Golgi to yield the mature SU and TM proteins. The cleavage site between SU and TM requires the minimal sequence [KR]-X-[KR]-R. The R-peptide is released from the C-terminus of the cytoplasmic tail of the TM protein upon particle formation as a result of proteolytic cleavage by the viral protease. Cleavage of this peptide is required for TM to become fusogenic. The transmembrane protein is palmitoylated. Post-translationally, the R-peptide is palmitoylated.

The protein resides in the virion membrane. The protein localises to the host cell membrane. Functionally, the surface protein (SU) attaches the virus to the host cell by binding to its receptor. This interaction triggers the refolding of the transmembrane protein (TM) and is thought to activate its fusogenic potential by unmasking its fusion peptide. Fusion occurs at the host cell plasma membrane. In terms of biological role, the transmembrane protein (TM) acts as a class I viral fusion protein. Under the current model, the protein has at least 3 conformational states: pre-fusion native state, pre-hairpin intermediate state, and post-fusion hairpin state. During viral and target cell membrane fusion, the coiled coil regions (heptad repeats) assume a trimer-of-hairpins structure, positioning the fusion peptide in close proximity to the C-terminal region of the ectodomain. The formation of this structure appears to drive apposition and subsequent fusion of viral and target cell membranes. Membranes fusion leads to delivery of the nucleocapsid into the cytoplasm. This chain is Envelope glycoprotein (env), found in Woolly monkey sarcoma virus (WMSV).